Reading from the N-terminus, the 620-residue chain is MSFDIAKYPTLALVDSTQELRLLPKESLPKLCDELRRYLLDSVSRSSGHFASGLGTVELTVALHYVYNTPFDQLIWDVGHQAYPHKILTGRRDKIGTIRQKGGLHPFPWRGESEYDVLSVGHSSTSISAGIGIAVAAEKEGKNRRTVCVIGDGAITAGMAFEAMNHAGDIRPDMLVVLNDNEMSISENVGALNNHLAQLLSGKLYSSLREGGKKVFSGVPPIKELLKRTEEHIKGMVVPGTLFEELGFNYIGPVDGHDVLGLITTLKNMRDLKGPQFLHIMTKKGRGYEPAEKDPITFHAVPKFDPSSGCLPKSSGGLPSYSKIFGDWLCETAAKDNKLMAITPAMREGSGMVEFSRKFPDRYFDVAIAEQHAVTFAAGLAIGGYKPIVAIYSTFLQRAYDQVLHDVAIQKLPVLFAIDRAGIVGADGQTHQGAFDLSYLRCIPEMVIMTPSDENECRQMLYTGYHYNDGPSAVRYPRGNAVGVELTPLEKLPIGKGTVKRRGEKLAILNFGTLMPEAAKVAESLNATLVDMRFVKPLDETLILEMAASHEALVTVEENAIMGGAGSGVNEVLMAHRKPVPVLNIGLPDFFIPQGTQEEMRAELGLDAAGMEAKIKAWLA.

Residues histidine 80 and 121–123 (GHS) contribute to the thiamine diphosphate site. Aspartate 152 contacts Mg(2+). Thiamine diphosphate-binding positions include 153 to 154 (GA), asparagine 181, tyrosine 288, and glutamate 370. Asparagine 181 is a binding site for Mg(2+).

It belongs to the transketolase family. DXPS subfamily. As to quaternary structure, homodimer. Mg(2+) serves as cofactor. Thiamine diphosphate is required as a cofactor.

It carries out the reaction D-glyceraldehyde 3-phosphate + pyruvate + H(+) = 1-deoxy-D-xylulose 5-phosphate + CO2. It participates in metabolic intermediate biosynthesis; 1-deoxy-D-xylulose 5-phosphate biosynthesis; 1-deoxy-D-xylulose 5-phosphate from D-glyceraldehyde 3-phosphate and pyruvate: step 1/1. Catalyzes the acyloin condensation reaction between C atoms 2 and 3 of pyruvate and glyceraldehyde 3-phosphate to yield 1-deoxy-D-xylulose-5-phosphate (DXP). In Shigella dysenteriae serotype 1 (strain Sd197), this protein is 1-deoxy-D-xylulose-5-phosphate synthase.